We begin with the raw amino-acid sequence, 1011 residues long: PE-PGRS family protein PE_PGRS30 (1011 aa).

One can recognise a PE domain in the interval 1-93; the sequence is MSFLLVEPDL…AAAYTGAEAA (93 aa). The PGRS domain stretch occupies residues 130 to 696; it reads SNAGGNGGPG…GGTGGTGGVL (567 aa). The span at 595–696 shows a compositional bias: gly residues; that stretch reads GGAGGTGGDH…GGTGGTGGVL (102 aa). The tract at residues 595–701 is disordered; it reads GGAGGTGGDH…TGGVLFGQSG (107 aa). Positions 697–1011 are C-terminal domain; sequence FGQSGSSGPP…PTQLAQAIAP (315 aa).

The protein belongs to the mycobacterial PE family. PGRS subfamily.

Its subcellular location is the secreted. The protein localises to the cell wall. It localises to the cell surface. In terms of biological role, mediates suppression of pro-inflammatory immune response in macrophages via modulation of host cytokine response. Required for full virulence. Involved in inhibition of phago-lysosome fusion. In Mycobacterium tuberculosis (strain ATCC 25618 / H37Rv), this protein is PE-PGRS family protein PE_PGRS30.